We begin with the raw amino-acid sequence, 431 residues long: UDP-N-acetylglucosamine 1-carboxyvinyltransferase (431 aa).

22-23 (KN) contacts phosphoenolpyruvate. A UDP-N-acetyl-alpha-D-glucosamine-binding site is contributed by R102. The active-site Proton donor is the C126. Residue C126 is modified to 2-(S-cysteinyl)pyruvic acid O-phosphothioketal. Residues 131-135 (RPVDL), D316, and I338 each bind UDP-N-acetyl-alpha-D-glucosamine.

It belongs to the EPSP synthase family. MurA subfamily.

It is found in the cytoplasm. The catalysed reaction is phosphoenolpyruvate + UDP-N-acetyl-alpha-D-glucosamine = UDP-N-acetyl-3-O-(1-carboxyvinyl)-alpha-D-glucosamine + phosphate. Its pathway is cell wall biogenesis; peptidoglycan biosynthesis. Functionally, cell wall formation. Adds enolpyruvyl to UDP-N-acetylglucosamine. This chain is UDP-N-acetylglucosamine 1-carboxyvinyltransferase, found in Beijerinckia indica subsp. indica (strain ATCC 9039 / DSM 1715 / NCIMB 8712).